Reading from the N-terminus, the 278-residue chain is Transmembrane protein 41A-B (278 aa).

The signal sequence occupies residues 1 to 23; that stretch reads MRSIWGLIVLVAAATFYLYLLSA. The next 5 helical transmembrane spans lie at 78–98, 101–121, 164–184, 191–211, and 230–250; these read GYVF…AIPG, FLNM…IACT, LFFF…FLNV, IPIP…NFIC, and WFTL…GALI.

The protein belongs to the TMEM41 family.

The protein localises to the membrane. The protein is Transmembrane protein 41A-B of Danio rerio (Zebrafish).